A 494-amino-acid polypeptide reads, in one-letter code: Voltage-gated potassium channel regulatory subunit KCNF1 (494 aa).

Residues 1–183 (MDGSGERSLP…KPESSCPARV (183 aa)) are Cytoplasmic-facing. A helical membrane pass occupies residues 184–204 (VAVLSFLLILVSSVVMCMGTI). The helical transmembrane segment at 224-244 (NVETACIGWFTLEYLLRLFSS) threads the bilayer. Residues 245–249 (PNKLH) lie on the Cytoplasmic side of the membrane. The helical transmembrane segment at 250-270 (FALSFMNIVDVLAILPFYVSL) threads the bilayer. Residues 290 to 310 (QALRIMRIARIFKLARHSSGL) form a helical; Voltage-sensor membrane-spanning segment. The Cytoplasmic segment spans residues 311–324 (QTLTYALKRSFKEL). A helical membrane pass occupies residues 325-345 (GLLLMYLAVGIFVFSALGYTM). Residues 358-378 (PQSFWWAIITMTTVGYGDIYP) constitute an intramembrane region (pore-forming). A Selectivity filter motif is present at residues 370 to 375 (TVGYGD). The chain crosses the membrane as a helical span at residues 386 to 406 (NAAISFLCGVIAIALPIHPII). Residues 407 to 494 (NNFVRYYNKQ…HHRTRLQSCK (88 aa)) lie on the Cytoplasmic side of the membrane. Positions 433 to 469 (NSSSGGEGKTGGSRSDLDNLPPEPAGKEAPSCSSRLK) are disordered.

It belongs to the potassium channel family. F (TC 1.A.1.2) subfamily. Kv5.1/KCNF1 sub-subfamily. In terms of assembly, heterotetramer with KCNB1 or KCNB2. In terms of tissue distribution, detected in heart, brain, liver, skeletal muscle, kidney and pancreas.

The protein resides in the cell membrane. Functionally, regulatory alpha-subunit of the voltage-gated potassium (Kv) channel which, when coassembled with KCNB1 or KCNB2, can modulate their expression and their gating kinetics by acting on deactivation upon repolarization and inactivation during maintained depolarization. Accelerates inactivation but has relatively little effect on deactivation. Coexpression with KCNB1 or KCNB2 markedly slows inactivation. Each modulatory subunit has its own specific properties of regulation, and can lead to extensive inhibitions, to large changes in kinetics, and/or to large shifts in the voltage dependencies of the inactivation process. The gating kinetics depends on the nature and stoichiometry of the associated regulatory sunbunit. Fails to produce a potassium current when expressed alone. In Homo sapiens (Human), this protein is Voltage-gated potassium channel regulatory subunit KCNF1.